A 215-amino-acid chain; its full sequence is Redox-sensing transcriptional repressor Rex (215 aa).

The segment at residues 18–57 (LYYRFLKNLHASGKQRVSSAELSDAVKVDSATIRRDFSYF) is a DNA-binding region (H-T-H motif). 92 to 97 (GVGNLG) is a binding site for NAD(+).

This sequence belongs to the transcriptional regulatory Rex family. In terms of assembly, homodimer.

The protein resides in the cytoplasm. Functionally, modulates transcription in response to changes in cellular NADH/NAD(+) redox state. The protein is Redox-sensing transcriptional repressor Rex of Bacillus velezensis (strain DSM 23117 / BGSC 10A6 / LMG 26770 / FZB42) (Bacillus amyloliquefaciens subsp. plantarum).